The chain runs to 295 residues: ATP synthase gamma chain (295 aa).

This sequence belongs to the ATPase gamma chain family. F-type ATPases have 2 components, CF(1) - the catalytic core - and CF(0) - the membrane proton channel. CF(1) has five subunits: alpha(3), beta(3), gamma(1), delta(1), epsilon(1). CF(0) has three main subunits: a, b and c.

Its subcellular location is the cell inner membrane. Functionally, produces ATP from ADP in the presence of a proton gradient across the membrane. The gamma chain is believed to be important in regulating ATPase activity and the flow of protons through the CF(0) complex. The chain is ATP synthase gamma chain from Sulfurimonas denitrificans (strain ATCC 33889 / DSM 1251) (Thiomicrospira denitrificans (strain ATCC 33889 / DSM 1251)).